The sequence spans 475 residues: Maintenance of mitochondrial morphology protein 1 (475 aa).

The Lumenal segment spans residues 1 to 14; sequence MSETFSPNLTFTEG. The chain crosses the membrane as a helical span at residues 15–35; sequence FVLGQASFLIILLLFIRYVVF. The Cytoplasmic segment spans residues 36–475; it reads SPSEQIDHEG…VTPGQVGTSR (440 aa). The SMP-LTD domain occupies 80–278; the sequence is PAESSDWVNV…HPNHISLALP (199 aa). Disordered regions lie at residues 321–381 and 394–475; these read NPVE…GQPQ and SYPH…GTSR. Over residues 341–351 the composition is skewed to pro residues; the sequence is PPTPLVQPPGT. Composition is skewed to polar residues over residues 353–380 and 394–403; these read PTLS…QGQP and SYPHYNTYTL. The segment covering 442 to 464 has biased composition (low complexity); sequence STTSSLTPSQSQSQFRFRGQFAS.

Belongs to the MMM1 family. As to quaternary structure, homodimer. Component of the ER-mitochondria encounter structure (ERMES) or MDM complex, composed of MMM1, MDM10, MDM12 and MDM34. An MMM1 homodimer associates with one molecule of MDM12 on each side in a pairwise head-to-tail manner, and the SMP-LTD domains of MMM1 and MDM12 generate a continuous hydrophobic tunnel for phospholipid trafficking.

Its subcellular location is the endoplasmic reticulum membrane. Functionally, component of the ERMES/MDM complex, which serves as a molecular tether to connect the endoplasmic reticulum (ER) and mitochondria. Components of this complex are involved in the control of mitochondrial shape and protein biogenesis, and function in nonvesicular lipid trafficking between the ER and mitochondria. The MDM12-MMM1 subcomplex functions in the major beta-barrel assembly pathway that is responsible for biogenesis of all outer membrane beta-barrel proteins, and acts in a late step after the SAM complex. The MDM10-MDM12-MMM1 subcomplex further acts in the TOM40-specific pathway after the action of the MDM12-MMM1 complex. Essential for establishing and maintaining the structure of mitochondria and maintenance of mtDNA nucleoids. In Cryptococcus neoformans var. neoformans serotype D (strain B-3501A) (Filobasidiella neoformans), this protein is Maintenance of mitochondrial morphology protein 1.